The sequence spans 617 residues: ATP-dependent rRNA helicase SPB4 (617 aa).

Positions 7–35 (WADLDYELQPWIKKAINVSGFDSMTPVQA) match the Q motif motif. The Helicase ATP-binding domain occupies 38–224 (IPMFAKNKDV…KTGLRNPVKI (187 aa)). Residue 51-58 (SVTGSGKT) coordinates ATP. A DEAD box motif is present at residues 172-175 (DEAD). Positions 252 to 406 (NLIHIMNNIR…ETDINKNKIS (155 aa)) constitute a Helicase C-terminal domain.

It belongs to the DEAD box helicase family. DDX55/SPB4 subfamily. In terms of assembly, component of pre-60S ribosomal complexes.

It localises to the nucleus. The protein resides in the nucleolus. The enzyme catalyses ATP + H2O = ADP + phosphate + H(+). In terms of biological role, ATP-binding RNA helicase involved in the biogenesis of 60S ribosomal subunits. Binds 90S pre-ribosomal particles and dissociates from pre-60S ribosomal particles after processing of 27SB pre-rRNA. Required for the normal formation of 18S rRNA through the processing of pre-rRNAs at sites A0, A1 and A2, and the normal formation of 25S and 5.8S rRNAs through the processing of pre-rRNAs at sites C1 and C2. In Candida glabrata (strain ATCC 2001 / BCRC 20586 / JCM 3761 / NBRC 0622 / NRRL Y-65 / CBS 138) (Yeast), this protein is ATP-dependent rRNA helicase SPB4.